The sequence spans 405 residues: L-rhamnonate dehydratase (405 aa).

Substrate contacts are provided by His-33 and Arg-59. 3 residues coordinate Mg(2+): Asp-226, Glu-252, and Glu-280. His-329 (proton acceptor) is an active-site residue. Glu-349 contributes to the substrate binding site.

This sequence belongs to the mandelate racemase/muconate lactonizing enzyme family. RhamD subfamily. As to quaternary structure, homooctamer; tetramer of dimers. Mg(2+) is required as a cofactor.

It catalyses the reaction L-rhamnonate = 2-dehydro-3-deoxy-L-rhamnonate + H2O. Functionally, catalyzes the dehydration of L-rhamnonate to 2-keto-3-deoxy-L-rhamnonate (KDR). The polypeptide is L-rhamnonate dehydratase (Escherichia coli (strain K12 / DH10B)).